Consider the following 263-residue polypeptide: Triosephosphate isomerase (263 aa).

Residue 10–12 (NWK) participates in substrate binding. His104 serves as the catalytic Electrophile. Residue Glu176 is the Proton acceptor of the active site. Residues Gly182, Ser221, and 242–243 (GG) each bind substrate.

This sequence belongs to the triosephosphate isomerase family. As to quaternary structure, homodimer.

Its subcellular location is the cytoplasm. The enzyme catalyses D-glyceraldehyde 3-phosphate = dihydroxyacetone phosphate. The protein operates within carbohydrate biosynthesis; gluconeogenesis. Its pathway is carbohydrate degradation; glycolysis; D-glyceraldehyde 3-phosphate from glycerone phosphate: step 1/1. Involved in the gluconeogenesis. Catalyzes stereospecifically the conversion of dihydroxyacetone phosphate (DHAP) to D-glyceraldehyde-3-phosphate (G3P). The sequence is that of Triosephosphate isomerase from Haemophilus influenzae (strain ATCC 51907 / DSM 11121 / KW20 / Rd).